We begin with the raw amino-acid sequence, 262 residues long: Shikimate dehydrogenase (NADP(+)) (262 aa).

Shikimate-binding positions include 15–17 (SRS) and threonine 62. The active-site Proton acceptor is lysine 66. Residue glutamate 78 coordinates NADP(+). Residues asparagine 87 and aspartate 102 each coordinate shikimate. NADP(+) contacts are provided by residues 126 to 130 (GAGGA), 150 to 155 (NRTQQR), and methionine 214. Residue tyrosine 216 participates in shikimate binding. An NADP(+)-binding site is contributed by glycine 236.

The protein belongs to the shikimate dehydrogenase family. As to quaternary structure, homodimer.

It carries out the reaction shikimate + NADP(+) = 3-dehydroshikimate + NADPH + H(+). It functions in the pathway metabolic intermediate biosynthesis; chorismate biosynthesis; chorismate from D-erythrose 4-phosphate and phosphoenolpyruvate: step 4/7. Its function is as follows. Involved in the biosynthesis of the chorismate, which leads to the biosynthesis of aromatic amino acids. Catalyzes the reversible NADPH linked reduction of 3-dehydroshikimate (DHSA) to yield shikimate (SA). The polypeptide is Shikimate dehydrogenase (NADP(+)) (Acinetobacter baylyi (strain ATCC 33305 / BD413 / ADP1)).